The chain runs to 664 residues: Probable urea active transporter 1 (664 aa).

A run of 16 helical transmembrane segments spans residues 9–29, 56–76, 86–106, 132–152, 165–185, 189–209, 252–272, 290–310, 327–347, 353–373, 395–415, 428–448, 454–474, 496–516, 555–575, and 587–607; these read SVGYGIVVGLGLGFAALMIFV, GLVASAVVSSWTWASTLLTSA, GAFWYASGACVQILLFTVLAI, GVFLVFAYITNILVMAMLLCG, TVAVCFLLPVGVIIYTMFGGI, FLTDYIHTVIILVILIMFSLA, GAIFFIINLAGNFGTVFVDNG, ILGGLAWFAIPWLAATTMGLV, MSDLEVSEGLVLPYAAIALMG, ATLLLVFMAVTSAASAELIAV, LLYTGHASLIVFGFAMSGFAT, YLLMGVLVCPAVVPATCVMLF, IAVTVSPVLGIISSIITWLVV, AGNVVGLLSPALYILILSIIF, VAALIITAAFIILWPWPMYGT, and WVVVGLIWIFFTVFAVGIFPL.

The protein belongs to the sodium:solute symporter (SSF) (TC 2.A.21) family.

The protein resides in the membrane. Functionally, involved in active transport of urea. This chain is Probable urea active transporter 1 (dur3-1), found in Schizosaccharomyces pombe (strain 972 / ATCC 24843) (Fission yeast).